We begin with the raw amino-acid sequence, 506 residues long: AMP phosphorylase (506 aa).

Residues Gly168, 194-199 (SRAITG), and Thr203 each bind AMP. Asp256 (proton donor) is an active-site residue. AMP contacts are provided by Ser264 and Lys288.

It belongs to the thymidine/pyrimidine-nucleoside phosphorylase family. Type 2 subfamily.

It carries out the reaction AMP + phosphate = alpha-D-ribose 1,5-bisphosphate + adenine. It catalyses the reaction CMP + phosphate = cytosine + alpha-D-ribose 1,5-bisphosphate. The enzyme catalyses UMP + phosphate = alpha-D-ribose 1,5-bisphosphate + uracil. Catalyzes the conversion of AMP and phosphate to adenine and ribose 1,5-bisphosphate (R15P). Exhibits phosphorylase activity toward CMP and UMP in addition to AMP. Functions in an archaeal AMP degradation pathway, together with R15P isomerase and RubisCO. The protein is AMP phosphorylase of Methanococcoides burtonii (strain DSM 6242 / NBRC 107633 / OCM 468 / ACE-M).